Here is a 128-residue protein sequence, read N- to C-terminus: U24-ctenitoxin-Pn1a (128 aa).

Thyroglobulin type-1 domains lie at 4–67 (KSDC…ECGC) and 72–127 (KERK…SLKC). Cystine bridges form between C7–C27, C38–C45, C47–C67, and C107–C127.

As to expression, expressed by the venom gland.

The protein resides in the secreted. Functionally, cysteine proteinase inhibitor. This Phoneutria nigriventer (Brazilian armed spider) protein is U24-ctenitoxin-Pn1a.